A 339-amino-acid chain; its full sequence is D-alanine--D-alanine ligase (339 aa).

The 208-residue stretch at 126 to 333 folds into the ATP-grasp domain; the sequence is KQVLASVGMP…YSELVTRLVE (208 aa). 158–213 provides a ligand contact to ATP; that stretch reads AGELGYPLFVKPANLGSSVGISKVSGPGELERALDLAFSLGRRVILEAMTAHKPRE. 3 residues coordinate Mg(2+): Asp-286, Glu-300, and Asn-302.

It belongs to the D-alanine--D-alanine ligase family. Mg(2+) is required as a cofactor. Mn(2+) serves as cofactor.

Its subcellular location is the cytoplasm. It carries out the reaction 2 D-alanine + ATP = D-alanyl-D-alanine + ADP + phosphate + H(+). It participates in cell wall biogenesis; peptidoglycan biosynthesis. In terms of biological role, cell wall formation. In Deinococcus geothermalis (strain DSM 11300 / CIP 105573 / AG-3a), this protein is D-alanine--D-alanine ligase.